The following is a 249-amino-acid chain: MGPHGKQSVLRMPLLLLLTCVQSGTGLESINYAPQLLGATLEGRLTQSTFTLEQPLGQFKNVNLSDPDPIWLVVAHSNAAQNFTAPRKVEDRHAPANFDRNGYYLTLRANRVHYKGGQPDSQLRVLRVGNDNNCSLESQGCNSPLPGAGPYRVKFLAMSAEGPVAETLWSEEIYLQQAQTFREAPGSQGKGTVVIIAFLSILLAILLVVFLVLVISACLSTSGSSPEEQVRMRHYHTHHMGSLRAERSS.

Residues 1 to 26 (MGPHGKQSVLRMPLLLLLTCVQSGTG) form the signal peptide. Residues 27–194 (LESINYAPQL…PGSQGKGTVV (168 aa)) lie on the Extracellular side of the membrane. 3 N-linked (GlcNAc...) asparagine glycosylation sites follow: asparagine 63, asparagine 82, and asparagine 133. A helical membrane pass occupies residues 195–215 (IIAFLSILLAILLVVFLVLVI). The Cytoplasmic segment spans residues 216–249 (SACLSTSGSSPEEQVRMRHYHTHHMGSLRAERSS).

The protein belongs to the uroplakin-3 family.

Its subcellular location is the membrane. The chain is Uroplakin-3b-like protein 1 from Mus musculus (Mouse).